A 53-amino-acid chain; its full sequence is Large ribosomal subunit protein bL33 (53 aa).

Belongs to the bacterial ribosomal protein bL33 family.

This is Large ribosomal subunit protein bL33 from Malacoplasma penetrans (strain HF-2) (Mycoplasma penetrans).